The following is a 211-amino-acid chain: Guanylate kinase (211 aa).

Residues 7–185 (GLLIVVTGPS…AVAELRAIIM (179 aa)) form the Guanylate kinase-like domain. 14-21 (GPSAVGKG) provides a ligand contact to ATP.

Belongs to the guanylate kinase family.

It is found in the cytoplasm. It catalyses the reaction GMP + ATP = GDP + ADP. Essential for recycling GMP and indirectly, cGMP. This chain is Guanylate kinase, found in Symbiobacterium thermophilum (strain DSM 24528 / JCM 14929 / IAM 14863 / T).